A 286-amino-acid polypeptide reads, in one-letter code: Bifunctional protein FolD (286 aa).

Residues 165–167 (GRS) and Ser190 contribute to the NADP(+) site.

Belongs to the tetrahydrofolate dehydrogenase/cyclohydrolase family. Homodimer.

It carries out the reaction (6R)-5,10-methylene-5,6,7,8-tetrahydrofolate + NADP(+) = (6R)-5,10-methenyltetrahydrofolate + NADPH. It catalyses the reaction (6R)-5,10-methenyltetrahydrofolate + H2O = (6R)-10-formyltetrahydrofolate + H(+). It functions in the pathway one-carbon metabolism; tetrahydrofolate interconversion. Catalyzes the oxidation of 5,10-methylenetetrahydrofolate to 5,10-methenyltetrahydrofolate and then the hydrolysis of 5,10-methenyltetrahydrofolate to 10-formyltetrahydrofolate. The polypeptide is Bifunctional protein FolD (Staphylococcus aureus (strain MRSA252)).